The primary structure comprises 1466 residues: ABC transporter C family member 6 (1466 aa).

10 helical membrane-spanning segments follow: residues 16–36, 63–83, 91–111, 128–148, 158–178, 286–306, 322–339, 400–420, 425–445, and 512–532; these read SVLSFFLNLVLLLILFGSWLF, LVLICCVSLSVFYSVLSLLSC, WPFLDLLLAALTWGSISVYLF, VWWVFFFVVSCYHLVVDFVLY, FVISDLVGVCAGLFLCCSCLW, IVLSALLAFVYTVSCYVAPYL, NQGYVLVTTFFVAKLVEC, WFMHDPWILVLQVSLALWILY, LGSIAAFPATILVMLANYPFA, and SVLWAAPSFISATAFGACLLL. Residues 286–567 enclose the ABC transmembrane type-1 1 domain; it reads IVLSALLAFV…LPETISMIVQ (282 aa). In terms of domain architecture, ABC transporter 1 spans 601–824; the sequence is VEISNGTFSW…GTDFMELVGA (224 aa). 636–643 contributes to the ATP binding site; that stretch reads GTVGSGKS. The interval 840-876 is disordered; the sequence is ASEKSTTDKENEVLHHKEKQENGSDNKPSGQLVQEEE. A compositionally biased stretch (basic and acidic residues) spans 844–863; that stretch reads STTDKENEVLHHKEKQENGS. The next 3 helical transmembrane spans lie at 890-910, 937-957, and 1026-1046; these read YMALAYGGAVIPLILVVQVLF, GFTLILVYVLLAVASSFCILI, and ILGIIGVIVQVAWQVLIVFIP. In terms of domain architecture, ABC transmembrane type-1 2 spans 900–1182; the sequence is IPLILVVQVL…LIWTLCDLEN (283 aa). The region spanning 1219–1453 is the ABC transporter 2 domain; it reads ITICNLQVRY…RSSLFSKLVA (235 aa). 1253 to 1260 contributes to the ATP binding site; sequence GRTGCGKS.

It belongs to the ABC transporter superfamily. ABCC family. Conjugate transporter (TC 3.A.1.208) subfamily. In terms of tissue distribution, ubiquitous.

It localises to the membrane. It catalyses the reaction ATP + H2O + xenobioticSide 1 = ADP + phosphate + xenobioticSide 2.. Its function is as follows. Pump for glutathione S-conjugates. This chain is ABC transporter C family member 6 (ABCC6), found in Arabidopsis thaliana (Mouse-ear cress).